The sequence spans 351 residues: Uroporphyrinogen decarboxylase (351 aa).

Substrate-binding positions include 25–29, aspartate 74, tyrosine 151, serine 206, and histidine 325; that span reads RQAGR.

It belongs to the uroporphyrinogen decarboxylase family. Homodimer.

Its subcellular location is the cytoplasm. It catalyses the reaction uroporphyrinogen III + 4 H(+) = coproporphyrinogen III + 4 CO2. Its pathway is porphyrin-containing compound metabolism; protoporphyrin-IX biosynthesis; coproporphyrinogen-III from 5-aminolevulinate: step 4/4. In terms of biological role, catalyzes the decarboxylation of four acetate groups of uroporphyrinogen-III to yield coproporphyrinogen-III. This chain is Uroporphyrinogen decarboxylase, found in Chlorobium chlorochromatii (strain CaD3).